The sequence spans 273 residues: MTSCADNIHDIICNDPNNIVVASMTCDDYFKKIITVIKKIHNRCYMKFINSQTKNGENTCKFIVTGDNSDNTMNCTRIVMKKKHFKYLRCDEKELFIKINVNDFCKKLDMINSYSEIIFYIKKDNINHLFINIITDKNSNNATRIPLIELNYNNISPLKIVFNDKLSVRSWYFFSIFKQIACSSKTIDIITDKKTILFVYTHGNKIKNIDNNINVNTDITTTNLGTYDLTTLSLISDFYEVYSEINMYFKENGLAFVIPIGFGKIYFLIESKK.

This is an uncharacterized protein from Acanthamoeba polyphaga mimivirus (APMV).